Reading from the N-terminus, the 452-residue chain is Solute carrier family 52, riboflavin transporter, member 3-B (452 aa).

5 helical membrane-spanning segments follow: residues 11–31, 38–58, 73–93, 111–131, and 138–158; these read LFGI…PLIV, WLLP…PLFI, PVIY…AFLW, LSFL…PFMM, and LTTY…VALV. 4 N-linked (GlcNAc...) asparagine glycosylation sites follow: Asn-168, Asn-174, Asn-179, and Asn-193. Transmembrane regions (helical) follow at residues 199–219, 285–305, 321–341, 344–364, 381–401, and 412–432; these read FFLF…LLNL, VFIF…LPSV, AATL…FVPI, LVLM…IMAM, ALIV…KVII, and ALVW…LSMF.

Belongs to the riboflavin transporter family.

The protein resides in the cell membrane. The enzyme catalyses riboflavin(in) = riboflavin(out). Plasma membrane transporter mediating the uptake by cells of the water soluble vitamin B2/riboflavin that plays a key role in biochemical oxidation-reduction reactions of the carbohydrate, lipid, and amino acid metabolism. The chain is Solute carrier family 52, riboflavin transporter, member 3-B (slc52a3b) from Danio rerio (Zebrafish).